A 570-amino-acid polypeptide reads, in one-letter code: Formate--tetrahydrofolate ligase (570 aa).

65-72 (TPYGEGKT) is a binding site for ATP.

The protein belongs to the formate--tetrahydrofolate ligase family.

It carries out the reaction (6S)-5,6,7,8-tetrahydrofolate + formate + ATP = (6R)-10-formyltetrahydrofolate + ADP + phosphate. It functions in the pathway one-carbon metabolism; tetrahydrofolate interconversion. This chain is Formate--tetrahydrofolate ligase, found in Shewanella piezotolerans (strain WP3 / JCM 13877).